Consider the following 196-residue polypeptide: Phosphoheptose isomerase (196 aa).

Positions Met36–Asp196 constitute an SIS domain. Asn51–Gly53 serves as a coordination point for substrate. Zn(2+) is bound by residues His60 and Glu64. Substrate-binding positions include Glu64, Asn93 to Asp94, Ser119 to Ser121, Ser124, and Gln174. Residues Gln174 and His182 each contribute to the Zn(2+) site.

This sequence belongs to the SIS family. GmhA subfamily. In terms of assembly, homotetramer. It depends on Zn(2+) as a cofactor.

The protein resides in the cytoplasm. It catalyses the reaction 2 D-sedoheptulose 7-phosphate = D-glycero-alpha-D-manno-heptose 7-phosphate + D-glycero-beta-D-manno-heptose 7-phosphate. Its pathway is carbohydrate biosynthesis; D-glycero-D-manno-heptose 7-phosphate biosynthesis; D-glycero-alpha-D-manno-heptose 7-phosphate and D-glycero-beta-D-manno-heptose 7-phosphate from sedoheptulose 7-phosphate: step 1/1. Catalyzes the isomerization of sedoheptulose 7-phosphate in D-glycero-D-manno-heptose 7-phosphate. This Laribacter hongkongensis (strain HLHK9) protein is Phosphoheptose isomerase.